Consider the following 295-residue polypeptide: Probable protein phosphatase 2C 54 (295 aa).

Residues 78 to 289 (GHGVVSVMGR…ENINVIVIDL (212 aa)) form the PPM-type phosphatase domain. Positions 112, 113, 228, and 280 each coordinate Mn(2+).

It belongs to the PP2C family. It depends on Mg(2+) as a cofactor. Mn(2+) serves as cofactor.

It catalyses the reaction O-phospho-L-seryl-[protein] + H2O = L-seryl-[protein] + phosphate. The catalysed reaction is O-phospho-L-threonyl-[protein] + H2O = L-threonyl-[protein] + phosphate. The protein is Probable protein phosphatase 2C 54 of Arabidopsis thaliana (Mouse-ear cress).